Here is a 229-residue protein sequence, read N- to C-terminus: Large ribosomal subunit protein uL1c (229 aa).

It belongs to the universal ribosomal protein uL1 family. In terms of assembly, part of the 50S ribosomal subunit.

The protein localises to the plastid. It is found in the chloroplast. In terms of biological role, binds directly to 23S rRNA. Might be involved in E site tRNA release (Potential). The polypeptide is Large ribosomal subunit protein uL1c (rpl1) (Porphyra purpurea (Red seaweed)).